Here is a 661-residue protein sequence, read N- to C-terminus: Bifunctional xylanase/xylan deacetylase (661 aa).

The signal sequence occupies residues 1 to 27 (MKLPTLGKCVVRTLMGAVALGAISVNA). The GH11 domain occupies 29 to 226 (TLSSNSTGTN…SRGSSDITVS (198 aa)). Catalysis depends on Glu116, which acts as the Nucleophile; for endoxylanase activity. The Proton donor; for endoxylanase activity role is filled by Glu213. The disordered stretch occupies residues 220 to 259 (SSDITVSEGTSGGGTSSVGGASSSVNSSTGGGSSGGITVR). Positions 237–247 (VGGASSSVNSS) are enriched in low complexity. The tract at residues 394 to 577 (SNCSGYVGIT…AKGLCPGRID (184 aa)) is polysaccharide deacetylase. In terms of domain architecture, NodB homology spans 398–574 (GYVGITFDDG…NLRAKGLCPG (177 aa)). A disordered region spans residues 578 to 610 (PNTGRAVAPSSSGGSSSVALSSSSRSSSSAGGN). Residues 581–608 (GRAVAPSSSGGSSSVALSSSSRSSSSAG) show a composition bias toward low complexity. The CBM10 domain maps to 616–645 (QCNWWGTFYPLCQTQTSGWGWENSRSCIST).

The protein in the N-terminal section; belongs to the glycosyl hydrolase 11 (cellulase G) family.

The protein resides in the secreted. The enzyme catalyses Endohydrolysis of (1-&gt;4)-beta-D-xylosidic linkages in xylans.. It catalyses the reaction Deacetylation of xylans and xylo-oligosaccharides.. The protein operates within glycan degradation; xylan degradation. In terms of biological role, endo-acting xylanase which specifically cleaves internal linkages on the xylan backbone, releasing xylooligosaccharides. Is able to hydrolyze oat spelt xylan and the arabinoxylans from wheat and rye, releasing xylobiose as the major product. Also likely catalyzes, via its C-terminal domain, the removal of acetyl groups from acetylated xylan. Thus, has the capability of hydrolyzing acetylated xylan. Does not attack mannan, galactan, arabinan or any cellulosic substrates. The sequence is that of Bifunctional xylanase/xylan deacetylase (xyn11A) from Cellvibrio japonicus (Pseudomonas fluorescens subsp. cellulosa).